Reading from the N-terminus, the 68-residue chain is UPF0253 protein AHA_2115 (68 aa).

This sequence belongs to the UPF0253 family.

This is UPF0253 protein AHA_2115 from Aeromonas hydrophila subsp. hydrophila (strain ATCC 7966 / DSM 30187 / BCRC 13018 / CCUG 14551 / JCM 1027 / KCTC 2358 / NCIMB 9240 / NCTC 8049).